The sequence spans 601 residues: Alpha-terpineol synthase, chloroplastic (601 aa).

Residues 1–47 (MSTISIHHVGILRNPLHSKSKRASINKPWSLSLPRSSSASRLVEPCR) constitute a chloroplast transit peptide. Residues aspartate 357 and aspartate 361 each contribute to the Mn(2+) site. The DDXXD motif signature appears at 357 to 361 (DDVYD). Homodimerization stretches follow at residues 363–369 (YGTLDEL) and 435–471 (EAEWYKSGYTPSLEEYLTIAKISIASLTILLSVELSL). Mn(2+) is bound by residues aspartate 499 and glutamate 507.

The protein belongs to the terpene synthase family. In terms of assembly, homodimer. Mn(2+) serves as cofactor. The cofactor is Mg(2+).

The protein resides in the plastid. It localises to the chloroplast. The enzyme catalyses (2E)-geranyl diphosphate + H2O = (S)-alpha-terpineol + diphosphate. The catalysed reaction is (2E)-geranyl diphosphate + H2O = (R)-alpha-terpineol + diphosphate. The protein operates within secondary metabolite biosynthesis; terpenoid biosynthesis. Its function is as follows. Involved in the biosynthesis of phenolic monoterpenes natural products. Monoterpene synthase which catalyzes the conversion of geranyl diphosphate (GPP) to alpha-terpineol (isomer is not determined). The chain is Alpha-terpineol synthase, chloroplastic from Thymus caespititius (Cretan thyme).